Reading from the N-terminus, the 64-residue chain is Large ribosomal subunit protein bL35 (64 aa).

The protein belongs to the bacterial ribosomal protein bL35 family.

This is Large ribosomal subunit protein bL35 from Acinetobacter baylyi (strain ATCC 33305 / BD413 / ADP1).